Reading from the N-terminus, the 523-residue chain is Mediator of RNA polymerase II transcription subunit 1.2 (523 aa).

This sequence belongs to the Mediator complex subunit 1 family. Component of the Mediator complex.

The protein localises to the nucleus. Component of the Mediator complex, a coactivator involved in the regulated transcription of nearly all RNA polymerase II-dependent genes. Mediator functions as a bridge to convey information from gene-specific regulatory proteins to the basal RNA polymerase II transcription machinery. Mediator is recruited to promoters by direct interactions with regulatory proteins and serves as a scaffold for the assembly of a functional preinitiation complex with RNA polymerase II and the general transcription factors. The sequence is that of Mediator of RNA polymerase II transcription subunit 1.2 (mdt-1.2) from Caenorhabditis briggsae.